Here is a 254-residue protein sequence, read N- to C-terminus: Probable transcriptional regulatory protein Saro_0419 (254 aa).

Residues Met-1 to Lys-14 show a composition bias toward basic residues. The interval Met-1–Ser-22 is disordered.

This sequence belongs to the TACO1 family.

The protein localises to the cytoplasm. This chain is Probable transcriptional regulatory protein Saro_0419, found in Novosphingobium aromaticivorans (strain ATCC 700278 / DSM 12444 / CCUG 56034 / CIP 105152 / NBRC 16084 / F199).